A 436-amino-acid chain; its full sequence is Phosphate-repressible acid phosphatase (436 aa).

The first 20 residues, 1–20 (MKGTAASALLIALSATAAQA), serve as a signal peptide directing secretion. N-linked (GlcNAc...) asparagine glycosylation is found at asparagine 227, asparagine 283, and asparagine 304.

Monomer.

It catalyses the reaction a phosphate monoester + H2O = an alcohol + phosphate. In Aspergillus niger, this protein is Phosphate-repressible acid phosphatase (pacA).